Reading from the N-terminus, the 512-residue chain is GMP synthase [glutamine-hydrolyzing] (512 aa).

Residues 7–197 (TIIVLDFGSQ…VFGVCGCSEG (191 aa)) form the Glutamine amidotransferase type-1 domain. Residue cysteine 84 is the Nucleophile of the active site. Catalysis depends on residues histidine 171 and glutamate 173. Residues 198-387 (WNMENFIEVE…LGIPDEIVWR (190 aa)) form the GMPS ATP-PPase domain. 225 to 231 (SGGVDSS) contributes to the ATP binding site.

In terms of assembly, homodimer.

The enzyme catalyses XMP + L-glutamine + ATP + H2O = GMP + L-glutamate + AMP + diphosphate + 2 H(+). Its pathway is purine metabolism; GMP biosynthesis; GMP from XMP (L-Gln route): step 1/1. In terms of biological role, catalyzes the synthesis of GMP from XMP. This chain is GMP synthase [glutamine-hydrolyzing], found in Bacillus cytotoxicus (strain DSM 22905 / CIP 110041 / 391-98 / NVH 391-98).